The sequence spans 257 residues: Acetylglutamate kinase (257 aa).

Substrate contacts are provided by residues Gly-41 to Gly-42, Arg-63, and Asn-155.

This sequence belongs to the acetylglutamate kinase family. ArgB subfamily.

The protein resides in the cytoplasm. The catalysed reaction is N-acetyl-L-glutamate + ATP = N-acetyl-L-glutamyl 5-phosphate + ADP. It participates in amino-acid biosynthesis; L-arginine biosynthesis; N(2)-acetyl-L-ornithine from L-glutamate: step 2/4. Catalyzes the ATP-dependent phosphorylation of N-acetyl-L-glutamate. In Solibacter usitatus (strain Ellin6076), this protein is Acetylglutamate kinase.